Consider the following 176-residue polypeptide: Nucleoside triphosphate/diphosphate phosphatase (176 aa).

Residue arginine 23 is the Proton donor of the active site. 6 residues coordinate Mg(2+): asparagine 87, aspartate 103, aspartate 105, aspartate 107, aspartate 120, and glutamate 123.

This sequence belongs to the Ntdp family. The cofactor is Mg(2+).

It carries out the reaction a ribonucleoside 5'-triphosphate + H2O = a ribonucleoside 5'-diphosphate + phosphate + H(+). The catalysed reaction is a ribonucleoside 5'-diphosphate + H2O = a ribonucleoside 5'-phosphate + phosphate + H(+). Has nucleoside phosphatase activity towards nucleoside triphosphates and nucleoside diphosphates. In Bacillus licheniformis (strain ATCC 14580 / DSM 13 / JCM 2505 / CCUG 7422 / NBRC 12200 / NCIMB 9375 / NCTC 10341 / NRRL NRS-1264 / Gibson 46), this protein is Nucleoside triphosphate/diphosphate phosphatase.